Reading from the N-terminus, the 57-residue chain is Large ribosomal subunit protein bL32 (57 aa).

A compositionally biased stretch (basic residues) spans 1-20 (MAVPKKKTSKTKRDQRKANW). The segment at 1–21 (MAVPKKKTSKTKRDQRKANWK) is disordered.

This sequence belongs to the bacterial ribosomal protein bL32 family.

The polypeptide is Large ribosomal subunit protein bL32 (Rippkaea orientalis (strain PCC 8801 / RF-1) (Cyanothece sp. (strain PCC 8801))).